Reading from the N-terminus, the 178-residue chain is Nicotinamide-nucleotide adenylyltransferase (178 aa).

This sequence belongs to the archaeal NMN adenylyltransferase family.

The protein resides in the cytoplasm. It carries out the reaction beta-nicotinamide D-ribonucleotide + ATP + H(+) = diphosphate + NAD(+). It participates in cofactor biosynthesis; NAD(+) biosynthesis; NAD(+) from nicotinamide D-ribonucleotide: step 1/1. The protein is Nicotinamide-nucleotide adenylyltransferase of Thermoplasma volcanium (strain ATCC 51530 / DSM 4299 / JCM 9571 / NBRC 15438 / GSS1).